We begin with the raw amino-acid sequence, 233 residues long: Orotidine 5'-phosphate decarboxylase (233 aa).

Substrate contacts are provided by residues aspartate 10, lysine 32, 60-69 (DLKLHDIPAT), threonine 115, arginine 176, glutamine 185, glycine 205, and arginine 206. The active-site Proton donor is the lysine 62.

The protein belongs to the OMP decarboxylase family. Type 1 subfamily. As to quaternary structure, homodimer.

It carries out the reaction orotidine 5'-phosphate + H(+) = UMP + CO2. Its pathway is pyrimidine metabolism; UMP biosynthesis via de novo pathway; UMP from orotate: step 2/2. Functionally, catalyzes the decarboxylation of orotidine 5'-monophosphate (OMP) to uridine 5'-monophosphate (UMP). The polypeptide is Orotidine 5'-phosphate decarboxylase (Thermobifida fusca (strain YX)).